Consider the following 249-residue polypeptide: NADH dehydrogenase [ubiquinone] flavoprotein 2, mitochondrial (249 aa).

A mitochondrion-targeting transit peptide spans 1 to 32 (MFLSAALRARAAGLAAHWGKHIRNLHKTAVQN). Lys-61 carries the N6-acetyllysine modification. [2Fe-2S] cluster contacts are provided by Cys-135, Cys-140, Cys-176, and Cys-180. A Phosphotyrosine; by SRC modification is found at Tyr-193. The segment at 213–249 (IPKPGPRSGRFSCEPAGGLTSLTEPPKGPGFGVQAGL) is disordered.

The protein belongs to the complex I 24 kDa subunit family. As to quaternary structure, core subunit of respiratory chain NADH dehydrogenase (Complex I) which is composed of 45 different subunits. This is a component of the flavoprotein-sulfur (FP) fragment of the enzyme. It depends on [2Fe-2S] cluster as a cofactor.

It is found in the mitochondrion inner membrane. The catalysed reaction is a ubiquinone + NADH + 5 H(+)(in) = a ubiquinol + NAD(+) + 4 H(+)(out). In terms of biological role, core subunit of the mitochondrial membrane respiratory chain NADH dehydrogenase (Complex I) which catalyzes electron transfer from NADH through the respiratory chain, using ubiquinone as an electron acceptor. Parts of the peripheral arm of the enzyme, where the electrons from NADH are accepted by flavin mononucleotide (FMN) and then passed along a chain of iron-sulfur clusters by electron tunnelling to the final acceptor ubiquinone. Contains one iron-sulfur cluster. This chain is NADH dehydrogenase [ubiquinone] flavoprotein 2, mitochondrial (NDUFV2), found in Bos taurus (Bovine).